Consider the following 124-residue polypeptide: Small ribosomal subunit protein uS12 (124 aa).

Asp-89 bears the 3-methylthioaspartic acid mark. The interval 103 to 124 (DTAGVKDRRQGRSKYGAKRPKD) is disordered. Positions 113–124 (GRSKYGAKRPKD) are enriched in basic residues.

Belongs to the universal ribosomal protein uS12 family. Part of the 30S ribosomal subunit. Contacts proteins S8 and S17. May interact with IF1 in the 30S initiation complex.

In terms of biological role, with S4 and S5 plays an important role in translational accuracy. Its function is as follows. Interacts with and stabilizes bases of the 16S rRNA that are involved in tRNA selection in the A site and with the mRNA backbone. Located at the interface of the 30S and 50S subunits, it traverses the body of the 30S subunit contacting proteins on the other side and probably holding the rRNA structure together. The combined cluster of proteins S8, S12 and S17 appears to hold together the shoulder and platform of the 30S subunit. The sequence is that of Small ribosomal subunit protein uS12 from Acaryochloris marina (strain MBIC 11017).